The primary structure comprises 202 residues: Transmembrane 4 L6 family member 4 (202 aa).

The Cytoplasmic segment spans residues Met1–Cys9. The chain crosses the membrane as a helical span at residues Leu10–Phe30. Topologically, residues Pro31–Tyr48 are extracellular. Residues Phe49–Leu69 form a helical membrane-spanning segment. The Cytoplasmic portion of the chain corresponds to Gln70–Thr93. Residues Leu94–Ile114 form a helical membrane-spanning segment. Residues Asn115 to Thr158 lie on the Extracellular side of the membrane. An N-linked (GlcNAc...) asparagine glycan is attached at Asn156. Residues Leu159–Ile179 traverse the membrane as a helical segment. The Cytoplasmic portion of the chain corresponds to Asn180–Val202.

The protein belongs to the L6 tetraspanin family.

The protein resides in the membrane. In terms of biological role, regulates the adhesive and proliferative status of intestinal epithelial cells. Can mediate density-dependent cell proliferation. The sequence is that of Transmembrane 4 L6 family member 4 (Tm4sf4) from Mus musculus (Mouse).